The sequence spans 309 residues: MEQTFSVTTAQRLDTFLATLLNLSRVKVAKLIVDGLVSVNGKKITKNGWLVQPEDRVHVNWSEELFEKVPVEVQPYDFPLDILYEDEQIMVVNKPNGLISHPTSFNESESLLGAALFHCNHQPVFLVHRLDRDTSGVIMLAKNQSSLLHLQKQLQQRVMKRYYLALVHFPLDSLSGTISAPLERVGNNKVMWKVGNSSNKAKNAFTKFTVLNQNEKAALIKCELLTGRTHQIRVHLQFIKHPVYNDPLYGLKSEQATEYGQYLHAQQISFIHPTLNKEMGFEAQLDKTFSDKLDNLNLKIANSLYALFQ.

Residues Gln-11–Glu-87 enclose the S4 RNA-binding domain. The active site involves Asp-131.

Belongs to the pseudouridine synthase RluA family.

It catalyses the reaction a uridine in RNA = a pseudouridine in RNA. This is an uncharacterized protein from Mycoplasma pneumoniae (strain ATCC 29342 / M129 / Subtype 1) (Mycoplasmoides pneumoniae).